The sequence spans 495 residues: MIHFADLGAISLANSNTVIAGCIVFALYYLFQFLNSKKLNFDAPVIGDASDLRSALINGYNQCPNTPFLLPTAAHPTIILPIKYIDEIKSLPPDKISFLEEFRDRYFGHYTAFANNTEGDAVTTSVKVDLTQSIARALENMQAETELAFATELPKPKDWMSVTLYPIILRMVAKVSGRVMVGEPLCRNEKWIQISTTYTRDTFLGGRAVWARHPLFRPIYALYSPELKKVRQHYTDAAEFLRPIFNQRFKEMERDDFEKPQDMIQWMIDNSGNNAKDATFQGRCQLLISFAALHTTSGLLGNAMLDLAARPKYIEALREEIAANLPENTQITKQILTKLRKMDSFLKESQRMNPLNLVTMNRKMMDTVQLSDGTILPKGSFLGMAAGSIGFDPRIFENPDEFDGFRFEKLRQQEGAENKFQLVTTGKDSLAFGHGTHSCPGRFFASNEIKTMLIELLRNYDFQLLPGTERPKNLKSDMSLVVDPTAQIQIKERCR.

A helical membrane pass occupies residues 12-31 (LANSNTVIAGCIVFALYYLF). An N-linked (GlcNAc...) asparagine glycan is attached at asparagine 115. Cysteine 439 contributes to the heme binding site.

This sequence belongs to the cytochrome P450 family. Heme serves as cofactor.

It localises to the membrane. Its pathway is polyketide biosynthesis. Its function is as follows. Cytochrome P450 monooxygenase; part of the gene cluster A that mediates the biosynthesis of botcinic acid and its botcinin derivatives, acetate-derived polyketides that contribute to virulence when combined with the sesquiterpene botrydial. Botcinic acid and its derivatives have been shown to induce chlorosis and necrosis during host plant infection, but also have antifungal activities. Two polyketide synthases, BOA6 and BOA9, are involved in the biosynthesis of botcinins. BOA6 mediates the formation of the per-methylated tetraketide core by condensation of four units of malonyl-CoA with one unit of acetyl-CoA, which would be methylated in activated methylene groups to yield a bicyclic acid intermediate that could then either be converted to botrylactone derivatives or lose the starter acetate unit through a retro-Claisen type C-C bond cleavage to yield botcinin derivatives. The second polyketide synthase, BOA9, is probably required for the biosynthesis of the tetraketide side chain of botcinins. The methyltransferase (MT) domain within BOA6 is probably responsible for the incorporation of four methyl groups. The trans-enoyl reductase BOA5 might take over the enoyl reductase function of BOA6 that misses an ER domain. The monooxygenases BOA2, BOA3 and BOA4 might be involved in further hydroxylations at C4, C5 and C8, whereas BOA7, close to BOA9, could potentially be involved in the hydroxylation at C4 in the side chain of botcinins. This Botryotinia fuckeliana (strain B05.10) (Noble rot fungus) protein is Cytochrome P450 monooxygenase BOA4.